The sequence spans 114 residues: MEKAQIYGKLVDKESRCEHWHGPLDVIALRFKCCNGYYACYECHQELVPHVTERYNINDETVPLVICGVCKLEMSFAAYSDSLQCPNCRSQFNPGCKLHYDMYFMKDDEPENLR.

A CHY-type; degenerate zinc finger spans residues 10-90; it reads LVDKESRCEH…DSLQCPNCRS (81 aa). The Zn(2+) site is built by Cys17, His19, Cys40, Cys43, Cys67, Cys70, Cys85, and Cys88.

In terms of assembly, interacts with the small Tim proteins.

Its subcellular location is the mitochondrion intermembrane space. It is found in the mitochondrion membrane. Its function is as follows. Required for the assembly or recycling of the small Tim proteins in the mitochondrial intermembrane, thereby participating in the import and insertion of multi-pass transmembrane proteins into the mitochondrial inner membrane. The chain is Helper of Tim protein 13 (HOT13) from Kluyveromyces lactis (strain ATCC 8585 / CBS 2359 / DSM 70799 / NBRC 1267 / NRRL Y-1140 / WM37) (Yeast).